The primary structure comprises 381 residues: METAERVNLLGLDGAALSDLVGQWGGKPFRARQLQRWIHQRGADSFDAMTDLARDFRGQLAQQCRIQALPVNTEQRSSDGTRKWLFDVGQGNAIETVFIPEDDRGTLCVSSQAGCAVNCRFCSTGHQGFNRNLTSSEIIGQLWWAKRVLEADAGTARLGGAGNDDTRVVSNVVMMGMGEPLLNYDQLLPALRLMLDDNAYGLSRRRVTVSTSGVVPMMDRLSRDCPVALAVSLHAPTDALRDELVPLNKKYPLAELLAACERYLASAPRDFITFEYCMLDGINDTDQHARALIQVARQVRCKLNLIPFNPFPASGLKRSPSARVKVFAQRLMDAGIVTTVRKTRGDDIDAACGQLAGEVRDRTRVAQRNAGRTIPIAQVQA.

Glu-95 serves as the catalytic Proton acceptor. Positions 101–347 constitute a Radical SAM core domain; the sequence is EDDRGTLCVS…TTVRKTRGDD (247 aa). Cys-108 and Cys-352 form a disulfide bridge. [4Fe-4S] cluster-binding residues include Cys-115, Cys-119, and Cys-122. S-adenosyl-L-methionine is bound by residues 178-179, Ser-210, 232-234, and Asn-309; these read GE and SLH. Cys-352 (S-methylcysteine intermediate) is an active-site residue.

Belongs to the radical SAM superfamily. RlmN family. [4Fe-4S] cluster is required as a cofactor.

It localises to the cytoplasm. The enzyme catalyses adenosine(2503) in 23S rRNA + 2 reduced [2Fe-2S]-[ferredoxin] + 2 S-adenosyl-L-methionine = 2-methyladenosine(2503) in 23S rRNA + 5'-deoxyadenosine + L-methionine + 2 oxidized [2Fe-2S]-[ferredoxin] + S-adenosyl-L-homocysteine. The catalysed reaction is adenosine(37) in tRNA + 2 reduced [2Fe-2S]-[ferredoxin] + 2 S-adenosyl-L-methionine = 2-methyladenosine(37) in tRNA + 5'-deoxyadenosine + L-methionine + 2 oxidized [2Fe-2S]-[ferredoxin] + S-adenosyl-L-homocysteine. In terms of biological role, specifically methylates position 2 of adenine 2503 in 23S rRNA and position 2 of adenine 37 in tRNAs. m2A2503 modification seems to play a crucial role in the proofreading step occurring at the peptidyl transferase center and thus would serve to optimize ribosomal fidelity. This chain is Dual-specificity RNA methyltransferase RlmN, found in Bordetella petrii (strain ATCC BAA-461 / DSM 12804 / CCUG 43448).